A 379-amino-acid chain; its full sequence is Putative zinc metalloprotease BMEI0829 (379 aa).

H33 is a binding site for Zn(2+). E34 is a catalytic residue. H37 lines the Zn(2+) pocket. 4 consecutive transmembrane segments (helical) span residues L39–G61, V122–Y144, F305–L327, and I355–F377. Residues T133 to K208 form the PDZ domain.

It belongs to the peptidase M50B family. The cofactor is Zn(2+).

The protein resides in the cell inner membrane. This Brucella melitensis biotype 1 (strain ATCC 23456 / CCUG 17765 / NCTC 10094 / 16M) protein is Putative zinc metalloprotease BMEI0829.